Consider the following 539-residue polypeptide: CTP synthase (539 aa).

Positions 1-268 (MSFKCIFLTG…STFITEKLGL (268 aa)) are amidoligase domain. Residue Ser-14 coordinates CTP. Ser-14 serves as a coordination point for UTP. 15–20 (SLGKGL) serves as a coordination point for ATP. L-glutamine is bound at residue Tyr-55. Residue Asp-72 coordinates ATP. 2 residues coordinate Mg(2+): Asp-72 and Glu-142. CTP is bound by residues 149–151 (DIE), 188–193 (KTKPTQ), and Lys-224. UTP-binding positions include 188 to 193 (KTKPTQ) and Lys-224. Residues 294-533 (RIGLVGKYVQ…IQAAILYSRN (240 aa)) form the Glutamine amidotransferase type-1 domain. Gly-353 contributes to the L-glutamine binding site. The active-site Nucleophile; for glutamine hydrolysis is the Cys-380. Residues 381–384 (LGMQ), Glu-404, and Arg-461 contribute to the L-glutamine site. Catalysis depends on residues His-506 and Glu-508.

It belongs to the CTP synthase family. Homotetramer.

It catalyses the reaction UTP + L-glutamine + ATP + H2O = CTP + L-glutamate + ADP + phosphate + 2 H(+). The catalysed reaction is L-glutamine + H2O = L-glutamate + NH4(+). It carries out the reaction UTP + NH4(+) + ATP = CTP + ADP + phosphate + 2 H(+). The protein operates within pyrimidine metabolism; CTP biosynthesis via de novo pathway; CTP from UDP: step 2/2. With respect to regulation, allosterically activated by GTP, when glutamine is the substrate; GTP has no effect on the reaction when ammonia is the substrate. The allosteric effector GTP functions by stabilizing the protein conformation that binds the tetrahedral intermediate(s) formed during glutamine hydrolysis. Inhibited by the product CTP, via allosteric rather than competitive inhibition. Its function is as follows. Catalyzes the ATP-dependent amination of UTP to CTP with either L-glutamine or ammonia as the source of nitrogen. Regulates intracellular CTP levels through interactions with the four ribonucleotide triphosphates. The sequence is that of CTP synthase from Chlamydia felis (strain Fe/C-56) (Chlamydophila felis).